Reading from the N-terminus, the 68-residue chain is Large ribosomal subunit protein bL32 (68 aa).

The tract at residues 1–25 is disordered; that stretch reads MAVPQNKITKSRRGQRRSHDALVAG.

It belongs to the bacterial ribosomal protein bL32 family.

This is Large ribosomal subunit protein bL32 from Dinoroseobacter shibae (strain DSM 16493 / NCIMB 14021 / DFL 12).